Reading from the N-terminus, the 265-residue chain is Shikimate dehydrogenase (NADP(+)) (265 aa).

Shikimate-binding positions include 15–17 (SLS) and Thr-62. The Proton acceptor role is filled by Lys-66. Asn-87 and Asp-102 together coordinate shikimate. NADP(+) is bound by residues 125–129 (GAGGA), 149–154 (NRTLEK), and Leu-209. Tyr-211 contributes to the shikimate binding site. NADP(+) is bound at residue Gly-233.

Belongs to the shikimate dehydrogenase family. As to quaternary structure, homodimer.

The enzyme catalyses shikimate + NADP(+) = 3-dehydroshikimate + NADPH + H(+). It participates in metabolic intermediate biosynthesis; chorismate biosynthesis; chorismate from D-erythrose 4-phosphate and phosphoenolpyruvate: step 4/7. Functionally, involved in the biosynthesis of the chorismate, which leads to the biosynthesis of aromatic amino acids. Catalyzes the reversible NADPH linked reduction of 3-dehydroshikimate (DHSA) to yield shikimate (SA). In Legionella pneumophila (strain Lens), this protein is Shikimate dehydrogenase (NADP(+)).